The primary structure comprises 462 residues: Chromosomal replication initiator protein DnaA (462 aa).

A domain I, interacts with DnaA modulators region spans residues Met-1 to Ala-84. Residues Ala-84–Ser-125 form a domain II region. The domain III, AAA+ region stretch occupies residues Asn-126 to Ala-342. Residues Gly-170, Gly-172, Lys-173, and Thr-174 each contribute to the ATP site. Residues Asn-343 to Ser-462 are domain IV, binds dsDNA.

Belongs to the DnaA family. As to quaternary structure, oligomerizes as a right-handed, spiral filament on DNA at oriC.

It localises to the cytoplasm. In terms of biological role, plays an essential role in the initiation and regulation of chromosomal replication. ATP-DnaA binds to the origin of replication (oriC) to initiate formation of the DNA replication initiation complex once per cell cycle. Binds the DnaA box (a 9 base pair repeat at the origin) and separates the double-stranded (ds)DNA. Forms a right-handed helical filament on oriC DNA; dsDNA binds to the exterior of the filament while single-stranded (ss)DNA is stabiized in the filament's interior. The ATP-DnaA-oriC complex binds and stabilizes one strand of the AT-rich DNA unwinding element (DUE), permitting loading of DNA polymerase. After initiation quickly degrades to an ADP-DnaA complex that is not apt for DNA replication. Binds acidic phospholipids. In Shewanella denitrificans (strain OS217 / ATCC BAA-1090 / DSM 15013), this protein is Chromosomal replication initiator protein DnaA.